Reading from the N-terminus, the 307-residue chain is MNKQAEPILLGVIGGSGFYDLPGFDIVESVNPITPWGYPASPISIARTTSGFLIAFLARHGVGHIYTPTEVPSRANIAALKSLGVLAIVSFSAVGSLREDIPPEDFVLPTQIIDRTLCARPNTFFESGCVAHVSFGDPFDQDLYEILSSCGSNLKNGSKLHTKRKGDDLTVVCMEGPAFSTRAESNLYRSWGASIINMSVIPEAKLAREAEIAYQMVCMATDYDCWRMNEEPVTVETVMEHISNNKDNAKIFLLEAVKKLEAPLLQGFLGRNLRESVQNGIQTNHKHRNPDAIRRLQFLFPNLTIPH.

Residues S16, 59–60, and 92–93 contribute to the phosphate site; these read RH and SA. M198 is a substrate binding site. Phosphate is bound at residue S199. 222–224 contributes to the substrate binding site; the sequence is DYD.

This sequence belongs to the PNP/MTAP phosphorylase family. MTAP subfamily. As to quaternary structure, homotrimer.

The protein localises to the cytoplasm. Its subcellular location is the nucleus. The catalysed reaction is S-methyl-5'-thioadenosine + phosphate = 5-(methylsulfanyl)-alpha-D-ribose 1-phosphate + adenine. The protein operates within amino-acid biosynthesis; L-methionine biosynthesis via salvage pathway; S-methyl-5-thio-alpha-D-ribose 1-phosphate from S-methyl-5'-thioadenosine (phosphorylase route): step 1/1. In terms of biological role, catalyzes the reversible phosphorylation of S-methyl-5'-thioadenosine (MTA) to adenine and 5-methylthioribose-1-phosphate. Involved in the breakdown of MTA, a major by-product of polyamine biosynthesis. Responsible for the first step in the methionine salvage pathway after MTA has been generated from S-adenosylmethionine. Has broad substrate specificity with 6-aminopurine nucleosides as preferred substrates. The protein is S-methyl-5'-thioadenosine phosphorylase of Schizosaccharomyces pombe (strain 972 / ATCC 24843) (Fission yeast).